The chain runs to 156 residues: ATP synthase subunit b', chloroplastic (156 aa).

The helical transmembrane segment at 24 to 44 (ATLPLVAIQFILLMVLLNILL) threads the bilayer.

The protein belongs to the ATPase B chain family. In terms of assembly, F-type ATPases have 2 components, F(1) - the catalytic core - and F(0) - the membrane proton channel. F(1) has five subunits: alpha(3), beta(3), gamma(1), delta(1), epsilon(1). F(0) has four main subunits: a(1), b(1), b'(1) and c(10-14). The alpha and beta chains form an alternating ring which encloses part of the gamma chain. F(1) is attached to F(0) by a central stalk formed by the gamma and epsilon chains, while a peripheral stalk is formed by the delta, b and b' chains.

The protein localises to the plastid. Its subcellular location is the chloroplast thylakoid membrane. F(1)F(0) ATP synthase produces ATP from ADP in the presence of a proton or sodium gradient. F-type ATPases consist of two structural domains, F(1) containing the extramembraneous catalytic core and F(0) containing the membrane proton channel, linked together by a central stalk and a peripheral stalk. During catalysis, ATP synthesis in the catalytic domain of F(1) is coupled via a rotary mechanism of the central stalk subunits to proton translocation. Its function is as follows. Component of the F(0) channel, it forms part of the peripheral stalk, linking F(1) to F(0). The b'-subunit is a diverged and duplicated form of b found in plants and photosynthetic bacteria. This is ATP synthase subunit b', chloroplastic from Phaeodactylum tricornutum (strain CCAP 1055/1).